Reading from the N-terminus, the 44-residue chain is uncharacterized protein (44 aa).

This is an uncharacterized protein from Bacillus subtilis (strain 168).